We begin with the raw amino-acid sequence, 154 residues long: Transcriptional repressor NrdR (154 aa).

A zinc finger spans residues 3–34; the sequence is CPFCGNENTRVIDTRAAEDGFAIKRRRECENC. Residues 49–139 enclose the ATP-cone domain; the sequence is LIVVKKDGSK…VYRQFKDVNS (91 aa).

The protein belongs to the NrdR family. Requires Zn(2+) as cofactor.

Functionally, negatively regulates transcription of bacterial ribonucleotide reductase nrd genes and operons by binding to NrdR-boxes. This chain is Transcriptional repressor NrdR, found in Carboxydothermus hydrogenoformans (strain ATCC BAA-161 / DSM 6008 / Z-2901).